A 349-amino-acid chain; its full sequence is Ribosomal RNA small subunit methyltransferase H 1 (349 aa).

Residues 79 to 81, Asp-99, Phe-129, Asp-148, and Gln-155 each bind S-adenosyl-L-methionine; that span reads GGH.

It belongs to the methyltransferase superfamily. RsmH family.

The protein resides in the cytoplasm. The enzyme catalyses cytidine(1402) in 16S rRNA + S-adenosyl-L-methionine = N(4)-methylcytidine(1402) in 16S rRNA + S-adenosyl-L-homocysteine + H(+). In terms of biological role, specifically methylates the N4 position of cytidine in position 1402 (C1402) of 16S rRNA. The chain is Ribosomal RNA small subunit methyltransferase H 1 from Agathobacter rectalis (strain ATCC 33656 / DSM 3377 / JCM 17463 / KCTC 5835 / VPI 0990) (Eubacterium rectale).